The following is an 85-amino-acid chain: Large ribosomal subunit protein bL31B (85 aa).

It belongs to the bacterial ribosomal protein bL31 family. Type B subfamily. Part of the 50S ribosomal subunit.

This chain is Large ribosomal subunit protein bL31B, found in Pseudarthrobacter chlorophenolicus (strain ATCC 700700 / DSM 12829 / CIP 107037 / JCM 12360 / KCTC 9906 / NCIMB 13794 / A6) (Arthrobacter chlorophenolicus).